The primary structure comprises 75 residues: MYB-like transcription factor ETC3 (75 aa).

Residues 1-20 (MDNHRRTKQPKTNSIVTSSS) are disordered. Residues 34–71 (SQEEEDLVSRMHKLVGDRWELIAGRIPGRTAGEIERFW) form the Myb-like domain.

As to expression, expressed in leaf epidermal cells, stomate guard cells in leaves, cotyledons and hypocotyls, inflorescences, developing seeds and siliques.

It localises to the nucleus. Functionally, MYB-type transcription factor involved in epidermal cell fate specification. Acts as a negative regulator of trichome development, including endoreplication, by mediating lateral inhibition. Promotes the formation of hair developing cells in H position in root epidermis, probably by inhibiting non-hair cell formation. May have pleiotropic effects on flowering development and epidermal cell size through the regulation of endoreduplication. The protein is MYB-like transcription factor ETC3 (ETC3) of Arabidopsis thaliana (Mouse-ear cress).